Reading from the N-terminus, the 56-residue chain is Calsequestrin-1 (56 aa).

Y9 carries the phosphotyrosine modification. S47 bears the Phosphoserine mark.

The protein belongs to the calsequestrin family. Monomer; increases in response to a depletion of intracellular calcium. Homodimer. Homotetramer and homopolymer. Can form linear homooligomers. Ca(2+) ions promote oligomerization. Interacts (via C-terminal end and preferentially with the monomeric form) with STIM1; this interaction increases in response to a depletion of intracellular calcium, decreases both STIM1 aggregation and clustering, interaction of STIM1 with ORAI1 and store-operated Ca(2+) entry (SOCE) activity. Interacts with ASPH and TRDN. N-glycosylated.

The protein localises to the endoplasmic reticulum. It is found in the sarcoplasmic reticulum. Its subcellular location is the sarcoplasmic reticulum lumen. The protein resides in the sarcoplasmic reticulum membrane. It localises to the mitochondrion matrix. Its function is as follows. Calsequestrin is a high-capacity, moderate affinity, calcium-binding protein and thus acts as an internal calcium store in muscle. Calcium ions are bound by clusters of acidic residues at the protein surface, often at the interface between subunits. Can bind around 80 Ca(2+) ions. Regulates the release of lumenal Ca(2+) via the calcium release channel RYR1; this plays an important role in triggering muscle contraction. Negatively regulates store-operated Ca(2+) entry (SOCE) activity. This Canis lupus familiaris (Dog) protein is Calsequestrin-1 (CASQ1).